The primary structure comprises 195 residues: Large ribosomal subunit protein uL18 (195 aa).

The protein belongs to the universal ribosomal protein uL18 family. As to quaternary structure, part of the 50S ribosomal subunit. Contacts the 5S and 23S rRNAs.

In terms of biological role, this is one of the proteins that bind and probably mediate the attachment of the 5S RNA into the large ribosomal subunit, where it forms part of the central protuberance. The polypeptide is Large ribosomal subunit protein uL18 (Korarchaeum cryptofilum (strain OPF8)).